We begin with the raw amino-acid sequence, 82 residues long: ATP synthase subunit c (82 aa).

Transmembrane regions (helical) follow at residues 7–27 and 57–77; these read AASV…PGIG and FAFM…LLFA.

Belongs to the ATPase C chain family. F-type ATPases have 2 components, F(1) - the catalytic core - and F(0) - the membrane proton channel. F(1) has five subunits: alpha(3), beta(3), gamma(1), delta(1), epsilon(1). F(0) has four main subunits: a(1), b(1), b'(1) and c(10-14). The alpha and beta chains form an alternating ring which encloses part of the gamma chain. F(1) is attached to F(0) by a central stalk formed by the gamma and epsilon chains, while a peripheral stalk is formed by the delta, b and b' chains.

Its subcellular location is the cellular thylakoid membrane. Its function is as follows. F(1)F(0) ATP synthase produces ATP from ADP in the presence of a proton or sodium gradient. F-type ATPases consist of two structural domains, F(1) containing the extramembraneous catalytic core and F(0) containing the membrane proton channel, linked together by a central stalk and a peripheral stalk. During catalysis, ATP synthesis in the catalytic domain of F(1) is coupled via a rotary mechanism of the central stalk subunits to proton translocation. In terms of biological role, key component of the F(0) channel; it plays a direct role in translocation across the membrane. A homomeric c-ring of between 10-14 subunits forms the central stalk rotor element with the F(1) delta and epsilon subunits. The sequence is that of ATP synthase subunit c from Prochlorococcus marinus (strain MIT 9303).